Here is a 686-residue protein sequence, read N- to C-terminus: AsmA family protein YhjG (686 aa).

Residues 1 to 6 (MSKAGK) lie on the Cytoplasmic side of the membrane. The chain crosses the membrane as a helical span at residues 7–27 (ITAAISGAFLLLIVVAIILIA). Residues 28–686 (TFDWNRLKPT…CRTILSQMKK (659 aa)) lie on the Periplasmic side of the membrane. A disordered region spans residues 372–396 (VDSGKGAEKSKRSEQKKGEKSVQPA). Basic and acidic residues predominate over residues 376–391 (KGAEKSKRSEQKKGEK).

The protein belongs to the AsmA family.

The protein localises to the cell inner membrane. The protein is AsmA family protein YhjG (yhjG) of Escherichia coli (strain K12).